Reading from the N-terminus, the 494-residue chain is Glutamyl-tRNA(Gln) amidotransferase subunit A (494 aa).

Residues K81 and S156 each act as charge relay system in the active site. S180 functions as the Acyl-ester intermediate in the catalytic mechanism.

It belongs to the amidase family. GatA subfamily. As to quaternary structure, heterotrimer of A, B and C subunits.

The enzyme catalyses L-glutamyl-tRNA(Gln) + L-glutamine + ATP + H2O = L-glutaminyl-tRNA(Gln) + L-glutamate + ADP + phosphate + H(+). Allows the formation of correctly charged Gln-tRNA(Gln) through the transamidation of misacylated Glu-tRNA(Gln) in organisms which lack glutaminyl-tRNA synthetase. The reaction takes place in the presence of glutamine and ATP through an activated gamma-phospho-Glu-tRNA(Gln). This is Glutamyl-tRNA(Gln) amidotransferase subunit A from Mycobacterium tuberculosis (strain ATCC 25177 / H37Ra).